Here is a 498-residue protein sequence, read N- to C-terminus: ATP synthase subunit beta, chloroplastic (498 aa).

172 to 179 serves as a coordination point for ATP; that stretch reads GGAGVGKT.

This sequence belongs to the ATPase alpha/beta chains family. As to quaternary structure, F-type ATPases have 2 components, CF(1) - the catalytic core - and CF(0) - the membrane proton channel. CF(1) has five subunits: alpha(3), beta(3), gamma(1), delta(1), epsilon(1). CF(0) has four main subunits: a(1), b(1), b'(1) and c(9-12).

The protein resides in the plastid. The protein localises to the chloroplast thylakoid membrane. It catalyses the reaction ATP + H2O + 4 H(+)(in) = ADP + phosphate + 5 H(+)(out). In terms of biological role, produces ATP from ADP in the presence of a proton gradient across the membrane. The catalytic sites are hosted primarily by the beta subunits. This is ATP synthase subunit beta, chloroplastic from Aspidistra elatior (Cast-iron plant).